Reading from the N-terminus, the 312-residue chain is Bifunctional pinoresinol-lariciresinol reductase 2 (312 aa).

NADP(+) is bound by residues 11–17, Arg-36, and Lys-45; that span reads GGTGYIG. The active-site Proton acceptor is Lys-138. Residue Arg-142 coordinates NADP(+). His-270 provides a ligand contact to substrate.

It belongs to the NmrA-type oxidoreductase family. Isoflavone reductase subfamily. Dimer.

The catalysed reaction is (+)-lariciresinol + NADP(+) = (+)-pinoresinol + NADPH + H(+). The enzyme catalyses (-)-secoisolariciresinol + NADP(+) = (+)-lariciresinol + NADPH + H(+). It catalyses the reaction (-)-lariciresinol + NADP(+) = (-)-pinoresinol + NADPH + H(+). Its function is as follows. Reductase involved in lignan biosynthesis. Catalyzes the enantioselective sequential conversion of (+)-pinoresinol into (+)-lariciresinol and of (+)-lariciresinol into (-)-secoisolariciresinol. Can also convert with a lower efficiency (-)-pinoresinol into (-)-lariciresinol, but not (-)-lariciresinol into (+)-secoisolariciresinol. Abstracts the 4R-hydride from the NADPH cofactor during catalysis. The chain is Bifunctional pinoresinol-lariciresinol reductase 2 (PLR_Tp2) from Thuja plicata (Western red-cedar).